The chain runs to 814 residues: MADDGDMFLNFEIGDAPIKQTVKYTGGRWRDRVKAQKGEKGGQDQSKQASTARRDTGADYYTNRAAKRQRTEDGDSGRFSKTPRTGNAAERGPPPPPTHAMKTGLVSSRLFTSNPVPVTDFEELPQAEEAEPAQPSNAPLSAEAENFLSLGLSRRVSQHLATKLEMKAPTAIQKNTIPQLVKEDSDAFLQAETGSGKTLAYLLPIVHRILALSHNEDGTPKTTKVHRNSGLFAIILAPTRELCKQIAVVLEKVLRCAPWLVCTTVIGGESKKSEKARIRKGVNILIATPGRLTDHLDNTKVLDVGTVRWLVLDEGDRMMEMGFEDDIKTIVGKIRAGTLQKKNAEGVVLDGVLPSRRVTVLCSATMKMNVQKLGEISLEDAVHITASKSDMEKDAETGAVETAFSAPAQLKQAAIVTPAKLRLVTLIALLKSTFARKGSVMKAIIFISCADSVDYHFELLKSTTPRAEPEPKPEGEAPTKPNIHIESTVAPATYITSPANPTVMLHKLHGSLAQPVRSATLKAFSECKDPAVLITTDISSRGLDVPAVELVIEYDPAFAVPDHVHRIGRTARAGRAGKAVLFLLPGSEEGYISILPKSTPIAPQLYDSILQKGFATNINVPGTESGVLETDRQSWASRAEALQLHFEQRLLAPLPGATPVFESKSEKFAASKQGKKGKKDAKKDENKTPDNPLLVSARQAFRSHIRAYATHVREERVYFDITALHLGHMAKAFGLREAPGGIGGGVSRRTHRPVQPGDKTNKTSKSVGDGTARRPKKDDDDERDFGAADEDAGRRMKEKMKMMMGNMASEFNLG.

Residues 26-102 (GGRWRDRVKA…PPPPPTHAMK (77 aa)) form a disordered region. Basic and acidic residues-rich tracts occupy residues 28 to 42 (RWRDRVKAQKGEKGG) and 69 to 78 (QRTEDGDSGR). Positions 145 to 174 (ENFLSLGLSRRVSQHLATKLEMKAPTAIQK) match the Q motif motif. The Helicase ATP-binding domain occupies 178 to 384 (PQLVKEDSDA…EISLEDAVHI (207 aa)). 191–198 (AETGSGKT) is an ATP binding site. Positions 313–316 (DEGD) match the DEAD box motif. The Helicase C-terminal domain maps to 422–622 (RLVTLIALLK…GFATNINVPG (201 aa)). 3 disordered regions span residues 464-483 (TPRAEPEPKPEGEAPTKPNI), 662-695 (ESKSEKFAASKQGKKGKKDAKKDENKTPDNPLLV), and 741-795 (GIGG…AGRR). Residues 467–477 (AEPEPKPEGEA) show a composition bias toward basic and acidic residues. A compositionally biased stretch (acidic residues) spans 779–790 (DDDERDFGAADE).

It belongs to the DEAD box helicase family. DDX31/DBP7 subfamily.

It localises to the nucleus. The protein localises to the nucleolus. It carries out the reaction ATP + H2O = ADP + phosphate + H(+). In terms of biological role, ATP-binding RNA helicase involved in the biogenesis of 60S ribosomal subunits and is required for the normal formation of 25S and 5.8S rRNAs. In Neurospora crassa (strain ATCC 24698 / 74-OR23-1A / CBS 708.71 / DSM 1257 / FGSC 987), this protein is ATP-dependent RNA helicase dbp-7 (dbp-7).